The following is a 461-amino-acid chain: Photosystem II CP43 reaction center protein (461 aa).

A propeptide spanning residues 1 to 2 (ME) is cleaved from the precursor. T3 is modified (N-acetylthreonine). Residue T3 is modified to Phosphothreonine. The next 5 helical transmembrane spans lie at 57–81 (LFEV…PHLA), 122–143 (LIGP…KDKS), 166–188 (KSVY…RKIT), 243–263 (KPFA…LSYS), and 279–300 (WFNN…ASQA). Residue E355 coordinates [CaMn4O5] cluster. Residues 435-459 (RARAAAAGFEKGIDRDTEPVLSMTP) traverse the membrane as a helical segment.

It belongs to the PsbB/PsbC family. PsbC subfamily. In terms of assembly, PSII is composed of 1 copy each of membrane proteins PsbA, PsbB, PsbC, PsbD, PsbE, PsbF, PsbH, PsbI, PsbJ, PsbK, PsbL, PsbM, PsbT, PsbX, PsbY, PsbZ, Psb30/Ycf12, at least 3 peripheral proteins of the oxygen-evolving complex and a large number of cofactors. It forms dimeric complexes. Binds multiple chlorophylls and provides some of the ligands for the Ca-4Mn-5O cluster of the oxygen-evolving complex. It may also provide a ligand for a Cl- that is required for oxygen evolution. PSII binds additional chlorophylls, carotenoids and specific lipids. serves as cofactor.

It is found in the plastid. The protein resides in the chloroplast thylakoid membrane. In terms of biological role, one of the components of the core complex of photosystem II (PSII). It binds chlorophyll and helps catalyze the primary light-induced photochemical processes of PSII. PSII is a light-driven water:plastoquinone oxidoreductase, using light energy to abstract electrons from H(2)O, generating O(2) and a proton gradient subsequently used for ATP formation. The sequence is that of Photosystem II CP43 reaction center protein from Psilotum nudum (Whisk fern).